The primary structure comprises 222 residues: Ribosomal RNA small subunit methyltransferase G (222 aa).

Residues G84, F89, 141–142 (VE), and R154 contribute to the S-adenosyl-L-methionine site.

Belongs to the methyltransferase superfamily. RNA methyltransferase RsmG family.

Its subcellular location is the cytoplasm. The enzyme catalyses guanosine(527) in 16S rRNA + S-adenosyl-L-methionine = N(7)-methylguanosine(527) in 16S rRNA + S-adenosyl-L-homocysteine. Its function is as follows. Specifically methylates the N7 position of guanine in position 527 of 16S rRNA. This chain is Ribosomal RNA small subunit methyltransferase G, found in Bradyrhizobium sp. (strain ORS 278).